Here is a 269-residue protein sequence, read N- to C-terminus: NAD kinase (269 aa).

The active-site Proton acceptor is D45. Residues 45-46 (DG), 122-123 (NE), R149, D151, and A186 contribute to the NAD(+) site.

Belongs to the NAD kinase family. It depends on a divalent metal cation as a cofactor.

It is found in the cytoplasm. It carries out the reaction NAD(+) + ATP = ADP + NADP(+) + H(+). In terms of biological role, involved in the regulation of the intracellular balance of NAD and NADP, and is a key enzyme in the biosynthesis of NADP. Catalyzes specifically the phosphorylation on 2'-hydroxyl of the adenosine moiety of NAD to yield NADP. This chain is NAD kinase, found in Staphylococcus carnosus (strain TM300).